The sequence spans 351 residues: Phosphoribosylformylglycinamidine cyclo-ligase (351 aa).

It belongs to the AIR synthase family.

The protein resides in the cytoplasm. The enzyme catalyses 2-formamido-N(1)-(5-O-phospho-beta-D-ribosyl)acetamidine + ATP = 5-amino-1-(5-phospho-beta-D-ribosyl)imidazole + ADP + phosphate + H(+). Its pathway is purine metabolism; IMP biosynthesis via de novo pathway; 5-amino-1-(5-phospho-D-ribosyl)imidazole from N(2)-formyl-N(1)-(5-phospho-D-ribosyl)glycinamide: step 2/2. The sequence is that of Phosphoribosylformylglycinamidine cyclo-ligase from Xylella fastidiosa (strain Temecula1 / ATCC 700964).